Here is a 297-residue protein sequence, read N- to C-terminus: HTH-type transcriptional regulator PerR (297 aa).

An HTH lysR-type domain is found at 7 to 64; sequence APLNLLRAFEAAGRTGAFALAASELELSPSAISHAIRKLENLLDVRLFQRSTREITLT. The H-T-H motif DNA-binding region spans 24-44; sequence FALAASELELSPSAISHAIRK.

It belongs to the LysR transcriptional regulatory family.

Its function is as follows. Apparent regulatory gene involved in peroxide resistance in stationary phase. In Escherichia coli (strain K12), this protein is HTH-type transcriptional regulator PerR (perR).